The sequence spans 94 residues: Co-chaperonin GroES (94 aa).

This sequence belongs to the GroES chaperonin family. As to quaternary structure, heptamer of 7 subunits arranged in a ring. Interacts with the chaperonin GroEL.

Its subcellular location is the cytoplasm. Functionally, together with the chaperonin GroEL, plays an essential role in assisting protein folding. The GroEL-GroES system forms a nano-cage that allows encapsulation of the non-native substrate proteins and provides a physical environment optimized to promote and accelerate protein folding. GroES binds to the apical surface of the GroEL ring, thereby capping the opening of the GroEL channel. This is Co-chaperonin GroES from Listeria monocytogenes serotype 4b (strain CLIP80459).